The primary structure comprises 547 residues: Membrane transporter D1 (547 aa).

The Cytoplasmic segment spans residues 1-2 (MR). A helical membrane pass occupies residues 3–25 (ASVMLCAALGGFLFGYDTGVINA). The Extracellular segment spans residues 26–43 (ALFQMKDHFGFSEHSWQY). A helical membrane pass occupies residues 44 to 64 (ALIVAIAIAGAFVGAFISGFI). Topologically, residues 65 to 78 (SAAFGRRPCIAVAD) are cytoplasmic. The helical transmembrane segment at 79-99 (ALFVIGSVLMGAAPNVEVVLV) threads the bilayer. The Extracellular portion of the chain corresponds to 100–101 (SR). Residues 102 to 122 (VIVGLAIGISSATIPVYLAEV) form a helical membrane-spanning segment. The Cytoplasmic segment spans residues 123 to 136 (TSPKHRGATIVLNN). The chain crosses the membrane as a helical span at residues 137–157 (LFLTGGQFVAAGFTAIMVVFT). Over 158-164 (SKNIGWR) the chain is Extracellular. A helical membrane pass occupies residues 165 to 185 (VAIGIGALPAVVQAFCLLFFL). At 186–245 (PESPRWLLSKGHADRAKAVADKFEVDLCEFQEGDELPSVRIDYRPLMARDMRFRVVLSSG) the chain is on the cytoplasmic side. The helical transmembrane segment at 246–266 (LQIIQQFSGINTIMYYSSVIL) threads the bilayer. Residues 267-276 (YDAGFRDAIM) lie on the Extracellular side of the membrane. Residues 277 to 297 (PVVLSIPLAFMNALFTAVAIF) traverse the membrane as a helical segment. Topologically, residues 298–308 (TVDRFGRRRML) are cytoplasmic. Residues 309-329 (LISVFGCLVLLVVIAIIGFFI) traverse the membrane as a helical segment. Topologically, residues 330–339 (GTRISYSVGG) are extracellular. A helical transmembrane segment spans residues 340–360 (GLFLALLAVFLALYAPGIGCI). The Cytoplasmic segment spans residues 361-385 (PWVIMGEIFPTHLRTSAASVATMAN). A helical transmembrane segment spans residues 386–406 (WGANVLVSQVFPILMGAIGVG). A topological domain (extracellular) is located at residue glycine 407. The chain crosses the membrane as a helical span at residues 408 to 428 (TFTIISGLMALGCIFVYFFAV). The Cytoplasmic segment spans residues 429–547 (ETKGLTLEQI…AIKAAPHEPK (119 aa)). Disordered stretches follow at residues 449–468 (PPRFHEEGESGESGAGYRED) and 510–547 (VSNKFEERATSSSSDPQSLENQDEVRQAAIKAAPHEPK). Polar residues predominate over residues 519–529 (TSSSSDPQSLE).

It belongs to the major facilitator superfamily. Sugar transporter (TC 2.A.1.1) family.

The protein resides in the membrane. The polypeptide is Membrane transporter D1 (Leishmania donovani).